The sequence spans 705 residues: Elongation factor G (705 aa).

Residues 8-290 (HRYRNIGIMA…GVIHLLPSPA (283 aa)) form the tr-type G domain. GTP-binding positions include 17 to 24 (AHIDAGKT), 88 to 92 (DTPGH), and 142 to 145 (NKMD).

Belongs to the TRAFAC class translation factor GTPase superfamily. Classic translation factor GTPase family. EF-G/EF-2 subfamily.

It localises to the cytoplasm. Its function is as follows. Catalyzes the GTP-dependent ribosomal translocation step during translation elongation. During this step, the ribosome changes from the pre-translocational (PRE) to the post-translocational (POST) state as the newly formed A-site-bound peptidyl-tRNA and P-site-bound deacylated tRNA move to the P and E sites, respectively. Catalyzes the coordinated movement of the two tRNA molecules, the mRNA and conformational changes in the ribosome. This Xylella fastidiosa (strain 9a5c) protein is Elongation factor G.